A 303-amino-acid chain; its full sequence is Probable 5-dehydro-4-deoxyglucarate dehydratase (303 aa).

It belongs to the DapA family.

It catalyses the reaction 5-dehydro-4-deoxy-D-glucarate + H(+) = 2,5-dioxopentanoate + CO2 + H2O. Its pathway is carbohydrate acid metabolism; D-glucarate degradation; 2,5-dioxopentanoate from D-glucarate: step 2/2. The protein is Probable 5-dehydro-4-deoxyglucarate dehydratase of Ectopseudomonas mendocina (strain ymp) (Pseudomonas mendocina).